The primary structure comprises 155 residues: MTEEATTTLSSADITEIMKLLPHRYPFLMVDKIIEIDGDNTAIGIKNVTVNEPHFTGHFPEAPIMPGVLLIEGMAQTAGAICAKKEGQTGNLVYFMTIENARFRKPVVPGDRVEFHVKKNKQRGNIWKFHCDAKVDGALVAEADIGAMIVRKDQA.

H58 is a catalytic residue.

The protein belongs to the thioester dehydratase family. FabZ subfamily.

The protein resides in the cytoplasm. It catalyses the reaction a (3R)-hydroxyacyl-[ACP] = a (2E)-enoyl-[ACP] + H2O. Its function is as follows. Involved in unsaturated fatty acids biosynthesis. Catalyzes the dehydration of short chain beta-hydroxyacyl-ACPs and long chain saturated and unsaturated beta-hydroxyacyl-ACPs. The protein is 3-hydroxyacyl-[acyl-carrier-protein] dehydratase FabZ of Rhizobium etli (strain ATCC 51251 / DSM 11541 / JCM 21823 / NBRC 15573 / CFN 42).